The chain runs to 60 residues: Large ribosomal subunit protein uL30 (60 aa).

Belongs to the universal ribosomal protein uL30 family. As to quaternary structure, part of the 50S ribosomal subunit.

The protein is Large ribosomal subunit protein uL30 of Streptomyces avermitilis (strain ATCC 31267 / DSM 46492 / JCM 5070 / NBRC 14893 / NCIMB 12804 / NRRL 8165 / MA-4680).